We begin with the raw amino-acid sequence, 775 residues long: Rab3 GTPase-activating protein catalytic subunit (775 aa).

Serine 173, serine 330, serine 373, serine 375, and serine 384 each carry phosphoserine. The interval 324 to 351 is disordered; the sequence is DEGKKTSPSDSMTKAYPADAGKAGGQLG. The interval 386–414 is disordered; it reads AEDLRGNGQESTKKGGPKDMAPLKPEGRL. Serine 458 bears the Phosphoserine mark.

It belongs to the Rab3-GAP catalytic subunit family. In terms of assembly, the Rab3 GTPase-activating complex is a heterodimer composed of Rab3gap1 and Rab3gap2. The Rab3 GTPase-activating complex interacts with DMXL2. Interacts with LMAN1.

The protein resides in the cytoplasm. It is found in the endoplasmic reticulum. Its subcellular location is the golgi apparatus. The protein localises to the cis-Golgi network. Catalytic subunit of the Rab3 GTPase-activating (Rab3GAP) complex composed of RAB3GAP1 and RAB3GAP2, which has GTPase-activating protein (GAP) activity towards various Rab3 subfamily members (RAB3A, RAB3B, RAB3C and RAB3D), RAB5A and RAB43, and guanine nucleotide exchange factor (GEF) activity towards RAB18. As part of the Rab3GAP complex, acts as a GAP for Rab3 proteins by converting active RAB3-GTP to the inactive form RAB3-GDP. Rab3 proteins are involved in regulated exocytosis of neurotransmitters and hormones. The Rab3GAP complex, acts as a GEF for RAB18 by promoting the conversion of inactive RAB18-GDP to the active form RAB18-GTP. Recruits and stabilizes RAB18 at the cis-Golgi membrane where RAB18 is most likely activated. Also involved in RAB18 recruitment at the endoplasmic reticulum (ER) membrane where it maintains proper ER structure. Required for normal eye and brain development. May participate in neurodevelopmental processes such as proliferation, migration and differentiation before synapse formation, and non-synaptic vesicular release of neurotransmitters. This chain is Rab3 GTPase-activating protein catalytic subunit, found in Rattus norvegicus (Rat).